Here is a 332-residue protein sequence, read N- to C-terminus: Phosphate acyltransferase (332 aa).

Belongs to the PlsX family. In terms of assembly, homodimer. Probably interacts with PlsY.

The protein resides in the cytoplasm. The catalysed reaction is a fatty acyl-[ACP] + phosphate = an acyl phosphate + holo-[ACP]. It participates in lipid metabolism; phospholipid metabolism. In terms of biological role, catalyzes the reversible formation of acyl-phosphate (acyl-PO(4)) from acyl-[acyl-carrier-protein] (acyl-ACP). This enzyme utilizes acyl-ACP as fatty acyl donor, but not acyl-CoA. The protein is Phosphate acyltransferase of Caldanaerobacter subterraneus subsp. tengcongensis (strain DSM 15242 / JCM 11007 / NBRC 100824 / MB4) (Thermoanaerobacter tengcongensis).